Consider the following 651-residue polypeptide: Coronin-like protein (651 aa).

4 WD repeats span residues 79-110 (GHTA…GIWD), 138-169 (GHAR…KLWN), 180-210 (KHPD…RVWN), and 226-257 (AKNQ…GIWD). Positions 408 to 609 (APSFHEAKRP…TSPKSLGLKK (202 aa)) are disordered. The span at 427-451 (LEEKKEQPKVEKPISESEKEVKQEA) shows a compositional bias: basic and acidic residues. 3 positions are modified to phosphoserine: Ser441, Ser454, and Ser456. Over residues 452-465 (PKSPSPLKSASSSS) the composition is skewed to low complexity. Phosphothreonine is present on residues Thr517 and Thr529. Composition is skewed to basic and acidic residues over residues 523 to 540 (ETKK…ELKP) and 547 to 572 (TDRK…EQEK). 2 positions are modified to phosphoserine: Ser573 and Ser579. A compositionally biased stretch (low complexity) spans 578-590 (SSITAAKTAITAS). Residues 618–650 (VLQLEDVVDKLTKANLDKDERLLKLEQKIGELS) are a coiled coil.

It belongs to the WD repeat coronin family. Binds to F-actin.

The polypeptide is Coronin-like protein (CRN1) (Saccharomyces cerevisiae (strain ATCC 204508 / S288c) (Baker's yeast)).